The primary structure comprises 330 residues: Malate dehydrogenase (330 aa).

NAD(+) is bound at residue 13 to 19 (GAAGQIG). Positions 94 and 100 each coordinate substrate. Residues Asn107, Gln114, and 131–133 (VGN) contribute to the NAD(+) site. Residues Asn133 and Arg164 each coordinate substrate. The Proton acceptor role is filled by His189.

This sequence belongs to the LDH/MDH superfamily. MDH type 2 family.

The catalysed reaction is (S)-malate + NAD(+) = oxaloacetate + NADH + H(+). Catalyzes the reversible oxidation of malate to oxaloacetate. The chain is Malate dehydrogenase from Deinococcus radiodurans (strain ATCC 13939 / DSM 20539 / JCM 16871 / CCUG 27074 / LMG 4051 / NBRC 15346 / NCIMB 9279 / VKM B-1422 / R1).